The chain runs to 472 residues: MRRKRDTHIRRKRASATQLYKTCKQSGTCPPDIIPKVEGNTLADQILKYGSIGVFFGGLGIGSGSGTGGRTGYVPLPTTTPSRPVEIPLQPTRPPVITSVGASDSSIVSLVEESSFIEAGVPGPTSIVPSSSGFNVTTSVDSTPAIIDVATISDTTQVSVSTFNNPTFTDPSVLQPPPPLEASGRLLFSNDTVTTHSYENIPLDTFVVTTDNNSIVSSTPIPGRHPPARLGLYGRAIQQVKVVDPAFVTTPTRLVTYDNPAFEGLQDTTLEFQHSDLHNAPDSDFLDIVKLHRPALTARKTGIRVSRLGQRATMFTRSGKRIGGRVHFYHDLSPIPTENIELQPLLPSASATVTDANGINDGLYDVLLDNNVDITEVETPTGTNTQSVFASEISTTTANTTIPLNAGLDTHPGPDIALPVPTAETIFTPTVPVQPSGPIYIYGSDFILHPSLYVIPRKRKRLSYFFADVATY.

The Nuclear localization signal signature appears at 1–14 (MRRKRDTHIRRKRA). A disulfide bridge links C23 with C29. The Nuclear localization signal signature appears at 454–462 (VIPRKRKRL).

Belongs to the papillomaviridae L2 protein family. As to quaternary structure, interacts with major capsid protein L1. Interacts with E2; this interaction inhibits E2 transcriptional activity but not the DNA replication function E2. Interacts with host GADD45GIP1. Interacts with host HSPA8; this interaction is required for L2 nuclear translocation. Interacts with host importins KPNB2 and KPNB3. Forms a complex with importin alpha2-beta1 heterodimers via interaction with the importin alpha2 adapter. Interacts with host DYNLT1; this interaction is essential for virus intracellular transport during entry. Interacts (via C-terminus) with host retromer subunits VPS35 and VPS29. Post-translationally, highly phosphorylated.

The protein localises to the virion. It localises to the host nucleus. It is found in the host early endosome. Its subcellular location is the host Golgi apparatus. Minor protein of the capsid that localizes along the inner surface of the virion, within the central cavities beneath the L1 pentamers. Plays a role in capsid stabilization through interaction with the major capsid protein L1. Once the virion enters the host cell, L2 escorts the genomic DNA into the nucleus by promoting escape from the endosomal compartments and traffic through the host Golgi network. Mechanistically, the C-terminus of L2 possesses a cell-penetrating peptide that protudes from the host endosome, interacts with host cytoplasmic retromer cargo and thereby mediates the capsid delivery to the host trans-Golgi network. Plays a role through its interaction with host dynein in the intracellular microtubule-dependent transport of viral capsid toward the nucleus. Mediates the viral genome import into the nucleus through binding to host importins. Once within the nucleus, L2 localizes viral genomes to host PML bodies in order to activate early gene expression for establishment of infection. Later on, promotes late gene expression by interacting with the viral E2 protein and by inhibiting its transcriptional activation functions. During virion assembly, encapsidates the genome by direct interaction with the viral DNA. In Human papillomavirus type 34, this protein is Minor capsid protein L2.